Reading from the N-terminus, the 386-residue chain is Probable family 17 glucosidase SCW4 (386 aa).

The first 19 residues, 1–19 (MRLSNLIASASLLSAATLA), serve as a signal peptide directing secretion. The propeptide occupies 20-30 (APANHEHKDKR). The tract at residues 88–127 (ENNSQVSAAASPASSSAATSTQSSSSSQASSSSSSGEDVS) is disordered. A glycan (N-linked (GlcNAc...) asparagine) is linked at Asn89. Residue Glu323 is the Nucleophile of the active site.

It belongs to the glycosyl hydrolase 17 family. Post-translationally, N-glycosylated.

It is found in the secreted. Its subcellular location is the cell wall. Glucanases possibly play a role in cell expansion during growth, in cell-cell fusion during mating, and in spore release during sporulation. The chain is Probable family 17 glucosidase SCW4 (SCW4) from Saccharomyces cerevisiae (strain ATCC 204508 / S288c) (Baker's yeast).